The chain runs to 308 residues: B3 domain-containing protein REM23 (308 aa).

Positions 19–114 form a DNA-binding region, TF-B3 1; sequence FFKVLKRSDM…SFTVKIFNKD (96 aa). Positions 117-198 are disordered; the sequence is EMMQPPQSRA…TERTQNSKRT (82 aa). Residues 121–133 show a composition bias toward polar residues; the sequence is PPQSRASFASSSR. Residues 134-145 show a composition bias toward basic and acidic residues; it reads VKTEQDVKREEE. A compositionally biased stretch (polar residues) spans 149–166; the sequence is SSDSRSRGPTTAAETNRG. Residues 168-177 show a composition bias toward basic residues; it reads SYKRKLNFGK. Basic and acidic residues predominate over residues 178–198; sequence KKAEETQTYKRTERTQNSKRT. The segment at residues 216 to 308 is a DNA-binding region (TF-B3 2); it reads VAGFKIFISK…LELLLVVSKP (93 aa).

It localises to the nucleus. This is B3 domain-containing protein REM23 (REM23) from Arabidopsis thaliana (Mouse-ear cress).